The chain runs to 159 residues: Biogenesis of lysosome-related organelles complex 1 subunit 2 (159 aa).

Residues 1–37 (MDKPTTSAAAAAAQDSNLLPDSPQHGPTLSSASSFEA) are disordered. A compositionally biased stretch (polar residues) spans 14–36 (QDSNLLPDSPQHGPTLSSASSFE). Residues 69–134 (EDYKLLEEMN…KLEAAAYKLD (66 aa)) are a coiled coil.

Belongs to the BLOC1S2 family. As to quaternary structure, homodimer. Component of the biogenesis of lysosome-related organelles complex-1 (BLOC-1) composed of Blos1, Blos2, Blos3, Blos4, Dysb, Muted, Pldn and Snapin. Interacts with Snapin.

Functionally, component of the biogenesis of lysosome-related organelles complex-1 (BLOC-1) involved in pigment granule biogenesis. This is Biogenesis of lysosome-related organelles complex 1 subunit 2 from Drosophila melanogaster (Fruit fly).